The primary structure comprises 168 residues: S-ribosylhomocysteine lyase (168 aa).

Residues His54, His58, and Cys128 each contribute to the Fe cation site.

This sequence belongs to the LuxS family. As to quaternary structure, homodimer. Fe cation serves as cofactor.

It carries out the reaction S-(5-deoxy-D-ribos-5-yl)-L-homocysteine = (S)-4,5-dihydroxypentane-2,3-dione + L-homocysteine. Its function is as follows. Involved in the synthesis of autoinducer 2 (AI-2) which is secreted by bacteria and is used to communicate both the cell density and the metabolic potential of the environment. The regulation of gene expression in response to changes in cell density is called quorum sensing. Catalyzes the transformation of S-ribosylhomocysteine (RHC) to homocysteine (HC) and 4,5-dihydroxy-2,3-pentadione (DPD). This is S-ribosylhomocysteine lyase from Actinobacillus succinogenes (strain ATCC 55618 / DSM 22257 / CCUG 43843 / 130Z).